The following is a 331-amino-acid chain: Ornithine carbamoyltransferase, catabolic (331 aa).

Carbamoyl phosphate-binding positions include Ser-57 to Thr-60, Gln-82, Arg-106, and His-133 to Gln-136. L-ornithine-binding positions include Asn-166, Asp-230, and Ser-234–Met-235. Residues Cys-272–Leu-273 and Arg-317 contribute to the carbamoyl phosphate site.

Belongs to the aspartate/ornithine carbamoyltransferase superfamily. OTCase family.

The protein localises to the cytoplasm. The catalysed reaction is carbamoyl phosphate + L-ornithine = L-citrulline + phosphate + H(+). It functions in the pathway amino-acid degradation; L-arginine degradation via ADI pathway; carbamoyl phosphate from L-arginine: step 2/2. In terms of biological role, reversibly catalyzes the transfer of the carbamoyl group from carbamoyl phosphate (CP) to the N(epsilon) atom of ornithine (ORN) to produce L-citrulline. In Clostridium perfringens (strain ATCC 13124 / DSM 756 / JCM 1290 / NCIMB 6125 / NCTC 8237 / Type A), this protein is Ornithine carbamoyltransferase, catabolic (arcB).